A 337-amino-acid polypeptide reads, in one-letter code: tRNA N6-adenosine threonylcarbamoyltransferase (337 aa).

His111 and His115 together coordinate Fe cation. Residues 134-138 (LVSGG), Asp167, Gly180, and Asn272 each bind substrate. Asp300 is a Fe cation binding site.

This sequence belongs to the KAE1 / TsaD family. It depends on Fe(2+) as a cofactor.

It localises to the cytoplasm. The enzyme catalyses L-threonylcarbamoyladenylate + adenosine(37) in tRNA = N(6)-L-threonylcarbamoyladenosine(37) in tRNA + AMP + H(+). In terms of biological role, required for the formation of a threonylcarbamoyl group on adenosine at position 37 (t(6)A37) in tRNAs that read codons beginning with adenine. Is involved in the transfer of the threonylcarbamoyl moiety of threonylcarbamoyl-AMP (TC-AMP) to the N6 group of A37, together with TsaE and TsaB. TsaD likely plays a direct catalytic role in this reaction. The chain is tRNA N6-adenosine threonylcarbamoyltransferase from Yersinia pseudotuberculosis serotype I (strain IP32953).